The following is a 415-amino-acid chain: ATP-dependent RNA helicase RhlB (415 aa).

The Q motif signature appears at 9 to 37 (QRFSDLSLHPIVRDTLAKKGFDFCTPIQA). In terms of domain architecture, Helicase ATP-binding spans 40–218 (LPISLNGRDV…FEDMNDPEYI (179 aa)). An ATP-binding site is contributed by 53-60 (AQTGTGKT). Positions 164–167 (DEAD) match the DEAD box motif. Residues 241-389 (DKMALLLTLM…VSQYETEALL (149 aa)) form the Helicase C-terminal domain.

The protein belongs to the DEAD box helicase family. RhlB subfamily. Component of the RNA degradosome, which is a multiprotein complex involved in RNA processing and mRNA degradation.

The protein resides in the cytoplasm. It catalyses the reaction ATP + H2O = ADP + phosphate + H(+). Functionally, DEAD-box RNA helicase involved in RNA degradation. Has RNA-dependent ATPase activity and unwinds double-stranded RNA. This chain is ATP-dependent RNA helicase RhlB, found in Haemophilus influenzae (strain PittEE).